The sequence spans 662 residues: Serine/threonine kinase-like domain-containing protein STKLD1 (662 aa).

The region spanning 1–202 (MLNPGALGVN…ILDMATCSFL (202 aa)) is the Protein kinase domain. Residues 2–10 (LNPGALGVN) and K25 each bind ATP. Positions 639–662 (LQEDQLEPPAGQEAPLQGEPLFRP) are disordered.

It belongs to the protein kinase superfamily. Ser/Thr protein kinase family. STKL subfamily.

This is Serine/threonine kinase-like domain-containing protein STKLD1 (Stkld1) from Mus musculus (Mouse).